We begin with the raw amino-acid sequence, 95 residues long: DNA-directed RNA polymerase subunit Rpo11 (95 aa).

It belongs to the archaeal Rpo11/eukaryotic RPB11/RPC19 RNA polymerase subunit family. Part of the RNA polymerase complex.

It localises to the cytoplasm. It carries out the reaction RNA(n) + a ribonucleoside 5'-triphosphate = RNA(n+1) + diphosphate. Functionally, DNA-dependent RNA polymerase (RNAP) catalyzes the transcription of DNA into RNA using the four ribonucleoside triphosphates as substrates. In Methanococcus vannielii (strain ATCC 35089 / DSM 1224 / JCM 13029 / OCM 148 / SB), this protein is DNA-directed RNA polymerase subunit Rpo11.